The primary structure comprises 161 residues: ATP synthase subunit b' (161 aa).

A helical membrane pass occupies residues 30 to 47; sequence VMAIQFLVLAALLNKLFY.

This sequence belongs to the ATPase B chain family. In terms of assembly, F-type ATPases have 2 components, F(1) - the catalytic core - and F(0) - the membrane proton channel. F(1) has five subunits: alpha(3), beta(3), gamma(1), delta(1), epsilon(1). F(0) has four main subunits: a(1), b(1), b'(1) and c(10-14). The alpha and beta chains form an alternating ring which encloses part of the gamma chain. F(1) is attached to F(0) by a central stalk formed by the gamma and epsilon chains, while a peripheral stalk is formed by the delta, b and b' chains.

The protein localises to the cellular thylakoid membrane. Functionally, f(1)F(0) ATP synthase produces ATP from ADP in the presence of a proton or sodium gradient. F-type ATPases consist of two structural domains, F(1) containing the extramembraneous catalytic core and F(0) containing the membrane proton channel, linked together by a central stalk and a peripheral stalk. During catalysis, ATP synthesis in the catalytic domain of F(1) is coupled via a rotary mechanism of the central stalk subunits to proton translocation. In terms of biological role, component of the F(0) channel, it forms part of the peripheral stalk, linking F(1) to F(0). The b'-subunit is a diverged and duplicated form of b found in plants and photosynthetic bacteria. In Picosynechococcus sp. (strain ATCC 27264 / PCC 7002 / PR-6) (Agmenellum quadruplicatum), this protein is ATP synthase subunit b'.